Here is a 421-residue protein sequence, read N- to C-terminus: Protein ECERIFERUM 2 (421 aa).

Met1 is subject to N-acetylmethionine.

Belongs to the plant acyltransferase family. As to expression, expressed at high levels in the epidermis of stems and young siliques. Expressed in flowers.

It is found in the endoplasmic reticulum. The protein localises to the nucleus. Functionally, involved in biosynthesis of the epicuticular wax. Plays a role in very-long-chain fatty acid (VLCFA) biosynthesis and is required for C28 fatty acid elongation in stem. Despite its classification as a BAHD acyltransferase based on sequence homology, CER2 does not seem to share the catalytic mechanism of the members of the BAHD family. This Arabidopsis thaliana (Mouse-ear cress) protein is Protein ECERIFERUM 2 (CER2).